Here is a 115-residue protein sequence, read N- to C-terminus: U3-lycotoxin-Ls1k (115 aa).

The first 20 residues, 1-20 (MKFVLLFGVLVVTLFSYSSA), serve as a signal peptide directing secretion. A propeptide spanning residues 21–44 (EMLDDFDQADEDELLSLIEKEEAR) is cleaved from the precursor. 4 disulfide bridges follow: C48–C63, C55–C72, C62–C87, and C74–C85.

The protein belongs to the neurotoxin 19 (CSTX) family. 01 subfamily. In terms of tissue distribution, expressed by the venom gland.

The protein localises to the secreted. This is U3-lycotoxin-Ls1k from Lycosa singoriensis (Wolf spider).